Reading from the N-terminus, the 147-residue chain is Hemoglobin subunit epsilon (147 aa).

In terms of domain architecture, Globin spans 3-147 (HFTAEEKAAI…VAIALGHKYH (145 aa)). Phosphoserine occurs at positions 14 and 51. Residues H64 and H93 each contribute to the heme b site.

Belongs to the globin family. Heterotetramer of two alpha chains and two epsilon chains in early embryonic hemoglobin Gower-2; two zeta chains and two epsilon chains in early embryonic hemoglobin Gower-1. Red blood cells.

The epsilon chain is a beta-type chain of early mammalian embryonic hemoglobin. In Leontopithecus rosalia (Golden lion tamarin), this protein is Hemoglobin subunit epsilon (HBE1).